The primary structure comprises 620 residues: Glutathione-regulated potassium-efflux system protein KefC (620 aa).

Transmembrane regions (helical) follow at residues 4–24, 26–46, 54–74, 90–110, 114–134, 149–169, 178–198, 218–238, 270–290, 294–314, 327–347, and 359–379; these read HTLI…PIAV, LGLG…PWGL, SILH…GLEL, GALQ…LLGL, VAEL…MQAM, FAVL…IPLL, MGAF…VVLL, VFSA…EEVG, GLLL…GTLI, LRIV…LWLI, WFAV…GAAQ, and SLTL…VILN. Residues 399–518 form the RCK N-terminal domain; it reads QPRVIIAGFG…AGVEKPERET (120 aa). The interval 597–620 is disordered; that stretch reads GWQGTEEGKHTGNMADEPETKPSS.

It belongs to the monovalent cation:proton antiporter 2 (CPA2) transporter (TC 2.A.37) family. KefC subfamily. Homodimer. Interacts with the regulatory subunit KefF.

It localises to the cell inner membrane. Pore-forming subunit of a potassium efflux system that confers protection against electrophiles. Catalyzes K(+)/H(+) antiport. The sequence is that of Glutathione-regulated potassium-efflux system protein KefC from Escherichia coli (strain SMS-3-5 / SECEC).